The sequence spans 301 residues: Protein FAM221A (301 aa).

The disordered stretch occupies residues 235 to 271; sequence MHAPSTSSPQPLAGGNEVGPSTQLSSLRKPEEDDMAY.

Belongs to the FAM221 family.

This Mus musculus (Mouse) protein is Protein FAM221A (Fam221a).